Consider the following 241-residue polypeptide: 1-(5-phosphoribosyl)-5-[(5-phosphoribosylamino)methylideneamino] imidazole-4-carboxamide isomerase (241 aa).

The active-site Proton acceptor is aspartate 7. Aspartate 129 (proton donor) is an active-site residue.

Belongs to the HisA/HisF family.

The protein localises to the cytoplasm. The enzyme catalyses 1-(5-phospho-beta-D-ribosyl)-5-[(5-phospho-beta-D-ribosylamino)methylideneamino]imidazole-4-carboxamide = 5-[(5-phospho-1-deoxy-D-ribulos-1-ylimino)methylamino]-1-(5-phospho-beta-D-ribosyl)imidazole-4-carboxamide. It functions in the pathway amino-acid biosynthesis; L-histidine biosynthesis; L-histidine from 5-phospho-alpha-D-ribose 1-diphosphate: step 4/9. This chain is 1-(5-phosphoribosyl)-5-[(5-phosphoribosylamino)methylideneamino] imidazole-4-carboxamide isomerase, found in Buchnera aphidicola subsp. Baizongia pistaciae (strain Bp).